A 377-amino-acid polypeptide reads, in one-letter code: Ejaculatory bulb-specific protein 1 (377 aa).

The signal sequence occupies residues 1-20 (MVRQLILVLSLILFCGSSHA). The segment at 155–253 (PIRPGGLFPG…NRPGRPFPGG (99 aa)) is disordered. The segment covering 165-228 (GPSPGGPSPG…GGSPPSPGGP (64 aa)) has biased composition (pro residues).

Specifically expressed in the ejaculatory bulb and seminal fluid. Detected in mated females 3 minutes after the start of mating, and for at least 3 hours after the start of mating.

The protein localises to the secreted. Its function is as follows. Major protein component of the posterior mating plug. Accessory gland proteins constitute, or are required for formation of the anterior mating plug. Posterior mating plug forms before sperm transfer and the anterior mating plug is formed after the start of mating. The protein is Ejaculatory bulb-specific protein 1 of Drosophila melanogaster (Fruit fly).